The following is a 119-amino-acid chain: Ribonuclease P protein component (119 aa).

Belongs to the RnpA family. Consists of a catalytic RNA component (M1 or rnpB) and a protein subunit.

It catalyses the reaction Endonucleolytic cleavage of RNA, removing 5'-extranucleotides from tRNA precursor.. In terms of biological role, RNaseP catalyzes the removal of the 5'-leader sequence from pre-tRNA to produce the mature 5'-terminus. It can also cleave other RNA substrates such as 4.5S RNA. The protein component plays an auxiliary but essential role in vivo by binding to the 5'-leader sequence and broadening the substrate specificity of the ribozyme. The polypeptide is Ribonuclease P protein component (Bacillus cereus (strain ATCC 14579 / DSM 31 / CCUG 7414 / JCM 2152 / NBRC 15305 / NCIMB 9373 / NCTC 2599 / NRRL B-3711)).